The chain runs to 83 residues: RNA-binding protein Hfq (83 aa).

One can recognise a Sm domain in the interval 9–68; sequence DPYLNILRKERIPVSIFLVNGIKLQGQIESFDQFVILLRNTVSQMVYKHAISTVVPSRNV.

Belongs to the Hfq family. In terms of assembly, homohexamer.

RNA chaperone that binds small regulatory RNA (sRNAs) and mRNAs to facilitate mRNA translational regulation in response to envelope stress, environmental stress and changes in metabolite concentrations. Also binds with high specificity to tRNAs. In Chromohalobacter salexigens (strain ATCC BAA-138 / DSM 3043 / CIP 106854 / NCIMB 13768 / 1H11), this protein is RNA-binding protein Hfq.